The primary structure comprises 130 residues: Small ribosomal subunit protein uS8 (130 aa).

Belongs to the universal ribosomal protein uS8 family. As to quaternary structure, part of the 30S ribosomal subunit. Contacts proteins S5 and S12.

Functionally, one of the primary rRNA binding proteins, it binds directly to 16S rRNA central domain where it helps coordinate assembly of the platform of the 30S subunit. The polypeptide is Small ribosomal subunit protein uS8 (Aeromonas hydrophila subsp. hydrophila (strain ATCC 7966 / DSM 30187 / BCRC 13018 / CCUG 14551 / JCM 1027 / KCTC 2358 / NCIMB 9240 / NCTC 8049)).